The primary structure comprises 140 residues: Small ribosomal subunit protein uS12 (140 aa).

Asp-103 carries the 3-methylthioaspartic acid modification. A disordered region spans residues 120–140 (GVQKRMQARSKYGAKRPKKGK). Residues 125–140 (MQARSKYGAKRPKKGK) show a composition bias toward basic residues.

Belongs to the universal ribosomal protein uS12 family. As to quaternary structure, part of the 30S ribosomal subunit. Contacts proteins S8 and S17. May interact with IF1 in the 30S initiation complex.

With S4 and S5 plays an important role in translational accuracy. In terms of biological role, interacts with and stabilizes bases of the 16S rRNA that are involved in tRNA selection in the A site and with the mRNA backbone. Located at the interface of the 30S and 50S subunits, it traverses the body of the 30S subunit contacting proteins on the other side and probably holding the rRNA structure together. The combined cluster of proteins S8, S12 and S17 appears to hold together the shoulder and platform of the 30S subunit. The sequence is that of Small ribosomal subunit protein uS12 from Desulfitobacterium hafniense (strain Y51).